The chain runs to 1248 residues: von Willebrand factor A domain-containing protein 5B2 (1248 aa).

The 138-residue stretch at 1 to 138 folds into the VIT domain; sequence MPGLYCPTSW…TMTVTLCSSR (138 aa). Positions 184–204 are disordered; the sequence is VGSPEEERPTWEQPTATPDVF. Residues 354–527 form the VWFA domain; that stretch reads ELLFLLDGSG…KALEPALSDI (174 aa). Disordered regions lie at residues 590-650, 672-710, 751-789, 1008-1037, and 1126-1168; these read PEEV…SSDT, SASP…QQGC, ALAG…EPGQ, SKSA…RLSL, and DSAT…SSDL. A compositionally biased stretch (polar residues) spans 595 to 619; it reads SATSPGTEPTHTTEPLGTGTVSAEL. 3 stretches are compositionally biased toward low complexity: residues 684–701, 751–764, and 780–789; these read SSES…GSRP, ALAG…SGRA, and PDGLGPEPGQ. The segment covering 1127-1145 has biased composition (low complexity); the sequence is SATASCSQSPSSGSEGPGQ. The span at 1159-1168 shows a compositional bias: basic and acidic residues; the sequence is GMERQDSSDL.

The chain is von Willebrand factor A domain-containing protein 5B2 (Vwa5b2) from Mus musculus (Mouse).